The sequence spans 262 residues: MQVDLLSSAQSAHALHLFHKHSPLVHCMTNDVVQTFTANTLLALGASPAMVIETEEASQFAAIASALLINVGTLTQPRAQAMSAAVEQATRSQTPWTLDPVAVGALDYRRRFCVELLSHKPTAIRGNASEIMALAGVANGGRGVDTTDAAANAIPAAQTLARETGAIVVVTGEVDYVTDGHRIVGIHGGDPLMTKVVGTGCALSAVVAACCALPGDTLENIASACHWMKQAGERAVARSEGPGSFVPHFLDALWQLTQEVQA.

Met50 contributes to the substrate binding site. ATP contacts are provided by Arg125 and Thr171. Substrate is bound at residue Gly198.

The protein belongs to the Thz kinase family. Requires Mg(2+) as cofactor.

It carries out the reaction 5-(2-hydroxyethyl)-4-methylthiazole + ATP = 4-methyl-5-(2-phosphooxyethyl)-thiazole + ADP + H(+). Its pathway is cofactor biosynthesis; thiamine diphosphate biosynthesis; 4-methyl-5-(2-phosphoethyl)-thiazole from 5-(2-hydroxyethyl)-4-methylthiazole: step 1/1. In terms of biological role, catalyzes the phosphorylation of the hydroxyl group of 4-methyl-5-beta-hydroxyethylthiazole (THZ). The chain is Hydroxyethylthiazole kinase from Escherichia coli O7:K1 (strain IAI39 / ExPEC).